A 912-amino-acid polypeptide reads, in one-letter code: Protein translocase subunit SecA (912 aa).

ATP contacts are provided by residues Gln-87, 105–109 (GEGKT), and Asp-508. Positions 855–912 (QHQDAGGYGADEEVEQMQGGNAPVPVSQVTRDEPKVGRNDPCPCGSGKKYKHCHGQLS) are disordered. Cys-896, Cys-898, Cys-907, and His-908 together coordinate Zn(2+). Residues 902 to 912 (KKYKHCHGQLS) show a composition bias toward basic residues.

The protein belongs to the SecA family. As to quaternary structure, monomer and homodimer. Part of the essential Sec protein translocation apparatus which comprises SecA, SecYEG and auxiliary proteins SecDF-YajC and YidC. Zn(2+) is required as a cofactor.

The protein localises to the cell inner membrane. The protein resides in the cytoplasm. It carries out the reaction ATP + H2O + cellular proteinSide 1 = ADP + phosphate + cellular proteinSide 2.. In terms of biological role, part of the Sec protein translocase complex. Interacts with the SecYEG preprotein conducting channel. Has a central role in coupling the hydrolysis of ATP to the transfer of proteins into and across the cell membrane, serving both as a receptor for the preprotein-SecB complex and as an ATP-driven molecular motor driving the stepwise translocation of polypeptide chains across the membrane. In Xanthomonas campestris pv. campestris (strain 8004), this protein is Protein translocase subunit SecA.